A 196-amino-acid chain; its full sequence is Ras-related protein RabC (196 aa).

Position 13-20 (13-20 (GESGVGKS)) interacts with GTP. The short motif at 35 to 43 (FAPTLGVDF) is the Effector region element. GTP-binding positions include 63–67 (DTAGQ) and 121–124 (NKSD). 2 S-geranylgeranyl cysteine lipidation sites follow: C195 and C196.

This sequence belongs to the small GTPase superfamily. Rab family.

Its subcellular location is the cell membrane. In Dictyostelium discoideum (Social amoeba), this protein is Ras-related protein RabC (rabC).